Reading from the N-terminus, the 104-residue chain is Pyrimidine/purine nucleoside phosphorylase (104 aa).

Belongs to the nucleoside phosphorylase PpnP family.

The catalysed reaction is a purine D-ribonucleoside + phosphate = a purine nucleobase + alpha-D-ribose 1-phosphate. It carries out the reaction adenosine + phosphate = alpha-D-ribose 1-phosphate + adenine. The enzyme catalyses cytidine + phosphate = cytosine + alpha-D-ribose 1-phosphate. It catalyses the reaction guanosine + phosphate = alpha-D-ribose 1-phosphate + guanine. The catalysed reaction is inosine + phosphate = alpha-D-ribose 1-phosphate + hypoxanthine. It carries out the reaction thymidine + phosphate = 2-deoxy-alpha-D-ribose 1-phosphate + thymine. The enzyme catalyses uridine + phosphate = alpha-D-ribose 1-phosphate + uracil. It catalyses the reaction xanthosine + phosphate = alpha-D-ribose 1-phosphate + xanthine. In terms of biological role, catalyzes the phosphorolysis of diverse nucleosides, yielding D-ribose 1-phosphate and the respective free bases. Can use uridine, adenosine, guanosine, cytidine, thymidine, inosine and xanthosine as substrates. Also catalyzes the reverse reactions. The sequence is that of Pyrimidine/purine nucleoside phosphorylase from Pelobacter propionicus (strain DSM 2379 / NBRC 103807 / OttBd1).